Reading from the N-terminus, the 90-residue chain is Probable Fe(2+)-trafficking protein (90 aa).

Belongs to the Fe(2+)-trafficking protein family.

Its function is as follows. Could be a mediator in iron transactions between iron acquisition and iron-requiring processes, such as synthesis and/or repair of Fe-S clusters in biosynthetic enzymes. This is Probable Fe(2+)-trafficking protein from Ectopseudomonas mendocina (strain ymp) (Pseudomonas mendocina).